The primary structure comprises 143 residues: Holo-[acyl-carrier-protein] synthase (143 aa).

Mg(2+)-binding residues include Asp9 and Glu63.

This sequence belongs to the P-Pant transferase superfamily. AcpS family. Mg(2+) serves as cofactor.

The protein resides in the cytoplasm. The enzyme catalyses apo-[ACP] + CoA = holo-[ACP] + adenosine 3',5'-bisphosphate + H(+). Its function is as follows. Transfers the 4'-phosphopantetheine moiety from coenzyme A to a Ser of acyl-carrier-protein. The sequence is that of Holo-[acyl-carrier-protein] synthase from Burkholderia mallei (strain NCTC 10247).